A 76-amino-acid polypeptide reads, in one-letter code: Alpha/kappa-conotoxin-like pl14.3 (76 aa).

The signal sequence occupies residues 1-27 (MPSVRSVACCCLLWMMLSVQLVTPGSP). Residues 28-39 (ATAQLSGQRTAR) constitute a propeptide that is removed on maturation. Cystine bridges form between cysteine 46-cysteine 61 and cysteine 50-cysteine 63. The residue at position 64 (aspartate 64) is an Aspartic acid 1-amide. Residues 65–76 (GKRDVVSSSMAV) constitute a propeptide that is removed on maturation.

This sequence belongs to the conotoxin J superfamily. In terms of tissue distribution, expressed by the venom duct.

The protein resides in the secreted. Highly inhibits both nicotinic acetylcholine receptors (neuronal (alpha-3/beta-4) and muscular (alpha-1/beta-1/epsilon/delta) subtypes) and the voltage-gated potassium channel Kv1.6/KCNA6 subtype. The sequence is that of Alpha/kappa-conotoxin-like pl14.3 from Conus planorbis (Planorbis cone).